Here is a 428-residue protein sequence, read N- to C-terminus: Arginine biosynthesis bifunctional protein ArgJ, mitochondrial (428 aa).

6 residues coordinate substrate: Thr-171, Lys-197, Thr-208, Glu-294, Asn-423, and Ser-428. The Nucleophile role is filled by Thr-208.

Belongs to the ArgJ family. Heterodimer of an alpha and a beta chain. In terms of processing, the alpha and beta chains are autoproteolytically processed from a single precursor protein within the mitochondrion.

Its subcellular location is the mitochondrion matrix. It catalyses the reaction N(2)-acetyl-L-ornithine + L-glutamate = N-acetyl-L-glutamate + L-ornithine. The catalysed reaction is L-glutamate + acetyl-CoA = N-acetyl-L-glutamate + CoA + H(+). It participates in amino-acid biosynthesis; L-arginine biosynthesis; L-ornithine and N-acetyl-L-glutamate from L-glutamate and N(2)-acetyl-L-ornithine (cyclic): step 1/1. Its pathway is amino-acid biosynthesis; L-arginine biosynthesis; N(2)-acetyl-L-ornithine from L-glutamate: step 1/4. Catalyzes two activities which are involved in the cyclic version of arginine biosynthesis: the synthesis of acetylglutamate from glutamate and acetyl-CoA, and of ornithine by transacetylation between acetylornithine and glutamate. The polypeptide is Arginine biosynthesis bifunctional protein ArgJ, mitochondrial (Komagataella phaffii (strain GS115 / ATCC 20864) (Yeast)).